A 538-amino-acid polypeptide reads, in one-letter code: MVKQLKFSEDARQAMLRGVDQLANAVKVTIGPKGRNVVLDKEFTAPLITNDGVTIAKEIELEDPYENMGAKLVQEVANKTNEIAGDGTTTATVLAQAMIQEGLKNVTSGANPVGLRQGIDKAVKVAVEALHENSQKVENKNEIAQVGAISAADEEIGRYISEAMEKVGNDGVITIEESNGLNTELEVVEGMQFDRGYQSPYMVTDSDKMVAELERPYILVTDKKISSFQDILPLLEQVVQSNRPILIVADEVEGDALTNIVLNRMRGTFTAVAVKAPGFGDRRKAMLEDLAILTGAQVITDDLGLDLKDASIDMLGTASKVEVTKDNTTVVDGDGDENSIDARVSQLKSQIEETESDFDREKLQERLAKLAGGVAVIKVGAASETELKERKLRIEDALNSTRAAVEEGIVAGGGTALVNVYQKVSEIEAEGDIETGVNIVLKALTAPVRQIAENAGLEGSVIVERLKNAEPGVGFNAATDEWVNMLEAGIVDPTKVTRSALQHAASVAAMFLTTEAVVASIPEKNNDQPNMGGMPGMM.

Residues 29-32 (TIGP), 86-90 (DGTTT), Gly413, 476-478 (NAA), and Asp492 contribute to the ATP site.

This sequence belongs to the chaperonin (HSP60) family. In terms of assembly, forms a cylinder of 14 subunits composed of two heptameric rings stacked back-to-back. Interacts with the co-chaperonin GroES.

The protein localises to the cytoplasm. The catalysed reaction is ATP + H2O + a folded polypeptide = ADP + phosphate + an unfolded polypeptide.. In terms of biological role, together with its co-chaperonin GroES, plays an essential role in assisting protein folding. The GroEL-GroES system forms a nano-cage that allows encapsulation of the non-native substrate proteins and provides a physical environment optimized to promote and accelerate protein folding. This chain is Chaperonin GroEL, found in Staphylococcus aureus (strain bovine RF122 / ET3-1).